The primary structure comprises 630 residues: Heat shock cognate 70 kDa protein 3 (630 aa).

Positions Phe611–Asp630 are disordered. Positions Asn615–Asp630 are enriched in low complexity.

Belongs to the heat shock protein 70 family.

Its function is as follows. May function in protein folding and assembly, and disassembly of protein complexes. This Dictyostelium discoideum (Social amoeba) protein is Heat shock cognate 70 kDa protein 3.